The chain runs to 344 residues: S-adenosylmethionine:tRNA ribosyltransferase-isomerase (344 aa).

The protein belongs to the QueA family. As to quaternary structure, monomer.

The protein localises to the cytoplasm. The catalysed reaction is 7-aminomethyl-7-carbaguanosine(34) in tRNA + S-adenosyl-L-methionine = epoxyqueuosine(34) in tRNA + adenine + L-methionine + 2 H(+). Its pathway is tRNA modification; tRNA-queuosine biosynthesis. Functionally, transfers and isomerizes the ribose moiety from AdoMet to the 7-aminomethyl group of 7-deazaguanine (preQ1-tRNA) to give epoxyqueuosine (oQ-tRNA). The polypeptide is S-adenosylmethionine:tRNA ribosyltransferase-isomerase (Nitrosococcus oceani (strain ATCC 19707 / BCRC 17464 / JCM 30415 / NCIMB 11848 / C-107)).